Reading from the N-terminus, the 577-residue chain is MFS-type transporter pgmG (577 aa).

Residues Met1–Gln32 form a disordered region. Over residues Gly21 to Glu31 the composition is skewed to basic and acidic residues. 8 helical membrane passes run Phe45–Val65, Trp84–Tyr104, Trp111–Pro131, Ala141–Asn161, Thr174–Val194, Pro218–Leu238, Leu259–Gly279, and Cys292–Gly312. An N-linked (GlcNAc...) asparagine glycan is attached at Asn317. The chain crosses the membrane as a helical span at residues Phe330–Phe350. N-linked (GlcNAc...) asparagine glycosylation is present at Asn360. 5 consecutive transmembrane segments (helical) span residues Ala363–Leu383, Met395–Ile415, Gly426–Ala446, Val457–Ala477, and Ile532–Phe552.

Belongs to the major facilitator superfamily. TCR/Tet family.

It is found in the membrane. Functionally, MFS-type transporter; part of the gene cluster that mediates the biosynthesis of pleosporalin A, ascomycone A, as well as a third cryptic naphthoquinone derived pigment, all responsible for the coloration of conidia. Seems not to be involved in pigment biosynthesis although its expression is regulated by the cluster-specific transcription factor pgmR. The polypeptide is MFS-type transporter pgmG (Aspergillus terreus (strain NIH 2624 / FGSC A1156)).